A 266-amino-acid chain; its full sequence is Diphthine synthase (266 aa).

Residues leucine 9, aspartate 84, valine 87, 112-113 (SI), leucine 169, alanine 210, and histidine 235 each bind S-adenosyl-L-methionine.

It belongs to the diphthine synthase family. Homodimer.

It catalyses the reaction 2-[(3S)-amino-3-carboxypropyl]-L-histidyl-[translation elongation factor 2] + 3 S-adenosyl-L-methionine = diphthine-[translation elongation factor 2] + 3 S-adenosyl-L-homocysteine + 3 H(+). It functions in the pathway protein modification; peptidyl-diphthamide biosynthesis. S-adenosyl-L-methionine-dependent methyltransferase that catalyzes the trimethylation of the amino group of the modified target histidine residue in translation elongation factor 2 (EF-2), to form an intermediate called diphthine. The three successive methylation reactions represent the second step of diphthamide biosynthesis. The protein is Diphthine synthase of Methanosarcina barkeri (strain Fusaro / DSM 804).